Here is a 366-residue protein sequence, read N- to C-terminus: Chorismate synthase (366 aa).

Positions 47 and 53 each coordinate NADP(+). FMN-binding positions include 124 to 126 (RSS), Gly286, 301 to 305 (KPTAT), and Arg327.

Belongs to the chorismate synthase family. Homotetramer. It depends on FMNH2 as a cofactor.

It catalyses the reaction 5-O-(1-carboxyvinyl)-3-phosphoshikimate = chorismate + phosphate. It participates in metabolic intermediate biosynthesis; chorismate biosynthesis; chorismate from D-erythrose 4-phosphate and phosphoenolpyruvate: step 7/7. Functionally, catalyzes the anti-1,4-elimination of the C-3 phosphate and the C-6 proR hydrogen from 5-enolpyruvylshikimate-3-phosphate (EPSP) to yield chorismate, which is the branch point compound that serves as the starting substrate for the three terminal pathways of aromatic amino acid biosynthesis. This reaction introduces a second double bond into the aromatic ring system. In Microcystis aeruginosa (strain NIES-843 / IAM M-2473), this protein is Chorismate synthase.